The chain runs to 743 residues: Putative pre-mRNA-splicing factor ATP-dependent RNA helicase DHX32 (743 aa).

Position 1 is an N-acetylmethionine (Met1). Positions 1-28 are disordered; sequence MEEEGLECPNSSSEKRYFPESLDSSDGD. The region spanning 72 to 238 is the Helicase ATP-binding domain; sequence MENLLQNQIV…YGNVPVIEVK (167 aa). 85–92 is a binding site for ATP; that stretch reads GDAKCGKS. The short motif at 185-188 is the DEAH box element; the sequence is DDIH.

It belongs to the DEAD box helicase family. DEAH subfamily. Expressed in lymphoid tissues (at protein level). Expressed in brain, heart, skeletal muscle, colon, thymus, spleen, kidney, liver, small intestine, placenta, lung, lymphoid tissues and blood leukocytes.

The protein localises to the nucleus. The protein resides in the mitochondrion. It catalyses the reaction ATP + H2O = ADP + phosphate + H(+). The sequence is that of Putative pre-mRNA-splicing factor ATP-dependent RNA helicase DHX32 (DHX32) from Homo sapiens (Human).